Consider the following 192-residue polypeptide: ADP-ribosylation factor-like protein 4C (192 aa).

Residue glycine 2 is the site of N-myristoyl glycine attachment. GTP-binding positions include 20–27, 68–72, and 127–130; these read GLDSAGKT, DVGGQ, and NKQD.

It belongs to the small GTPase superfamily. Arf family. As to quaternary structure, interacts with CYTH2. Interacts with alpha tubulin; interaction is independent on the ARL4C GTP or GDP binding status. Expressed in several tumor cell lines (at protein level). Expressed in lung, brain, leukocytes and placenta.

The protein resides in the cell projection. It localises to the filopodium. Its subcellular location is the cell membrane. It is found in the cytoplasm. Functionally, small GTP-binding protein which cycles between an inactive GDP-bound and an active GTP-bound form, and the rate of cycling is regulated by guanine nucleotide exchange factors (GEF) and GTPase-activating proteins (GAP). GTP-binding protein that does not act as an allosteric activator of the cholera toxin catalytic subunit. May be involved in transport between a perinuclear compartment and the plasma membrane, apparently linked to the ABCA1-mediated cholesterol secretion pathway. Recruits CYTH1, CYTH2, CYTH3 and CYTH4 to the plasma membrane in the GDP-bound form. Regulates the microtubule-dependent intracellular vesicular transport from early endosome to recycling endosome process. The sequence is that of ADP-ribosylation factor-like protein 4C (ARL4C) from Homo sapiens (Human).